The following is a 388-amino-acid chain: UDP-N-acetylglucosamine--N-acetylmuramyl-(pentapeptide) pyrophosphoryl-undecaprenol N-acetylglucosamine transferase (388 aa).

UDP-N-acetyl-alpha-D-glucosamine-binding positions include 42 to 44, asparagine 159, arginine 195, serine 223, isoleucine 277, and glutamine 322; that span reads TGG.

This sequence belongs to the glycosyltransferase 28 family. MurG subfamily.

It is found in the cell inner membrane. The enzyme catalyses di-trans,octa-cis-undecaprenyl diphospho-N-acetyl-alpha-D-muramoyl-L-alanyl-D-glutamyl-meso-2,6-diaminopimeloyl-D-alanyl-D-alanine + UDP-N-acetyl-alpha-D-glucosamine = di-trans,octa-cis-undecaprenyl diphospho-[N-acetyl-alpha-D-glucosaminyl-(1-&gt;4)]-N-acetyl-alpha-D-muramoyl-L-alanyl-D-glutamyl-meso-2,6-diaminopimeloyl-D-alanyl-D-alanine + UDP + H(+). The protein operates within cell wall biogenesis; peptidoglycan biosynthesis. Cell wall formation. Catalyzes the transfer of a GlcNAc subunit on undecaprenyl-pyrophosphoryl-MurNAc-pentapeptide (lipid intermediate I) to form undecaprenyl-pyrophosphoryl-MurNAc-(pentapeptide)GlcNAc (lipid intermediate II). This chain is UDP-N-acetylglucosamine--N-acetylmuramyl-(pentapeptide) pyrophosphoryl-undecaprenol N-acetylglucosamine transferase, found in Albidiferax ferrireducens (strain ATCC BAA-621 / DSM 15236 / T118) (Rhodoferax ferrireducens).